The primary structure comprises 2302 residues: MMDFHFSFLFLLIGTSESQVDVSSSFDGTGYDITLSSVSATTYSSPVSRTLATNVTKPGPPVFLAGERVGSAGILLSWNTPPNPNGRIISYVVKYKEVCPWMQTAYTRARAKPDSLEVLLTNLNPGTTYEIKVAAENNAGIGVFSDPFLFQTAESAPGKVVNLTVEALNYSAVNLIWYLPRQPNGKITSFKISVKHARSGIVVKDVSLRVEDILSGKLPECNENSESFLWSTTSPSPTLGRVTPTVRTTQSSSTAARSKISSVWKEPISFVVTHLRPYTTYLFEVSAVTTEAGYIDSTIVRTPESVPEGPPQNCIMGNVTGKAFSISWDPPTIVTGKFSYRVELYGPSGRILDNSTKDLRFAFTHLTPFTMYDVYVAAETSAGVGPKSNLSVFTPPDVPGAVFDLQIAEVEATEIRITWRKPRQPNGIISQYRVKVSVLETGVVLENTLLTGQDESISNPMSPEIMNLVDPMIGFYEGSGEMSSDLHSPASFIYNSHPHNDFPASTRAEEQSSPVVTTRNQYMTDITAEQLSYVVRRLVPFTEHTISVSAFTIMGEGPPTVLTVRTREQVPSSIQIINYKNISSSSILLYWDPPEYPNGKITHYTIYATELDTNRAFQMTTVDNSFLITGLKKYTRYKMRVAASTHVGESSLSEENDIFVRTPEDEPESSPQDVQVTGVSPSELRLKWSPPEKPNGIIIAYEVLYQNADTLFVKNTSTTDIIISDLKPYTLYNISIRSYTRLGHGNQSSSLLSVRTSETVPDSAPENITYKNISSGEIEISFLPPRSPNGIIQKYTIYLKRSNSHEARTINTTSLTQTIGGLKKYTHYVIEVSASTLKGEGIRSRPISILTEEDAPDSPPQNFSVKQLSGVTVMLSWQPPLEPNGIILYYTVYVWDKSSLRAINATEASLVLSDLDYNVDYGACVTASTRFGDGNARSSIINFRTPEGEPSDPPNDVHYVNLSSSSIILFWTPPVKPNGIIQYYSVYYQNTSGTFVQNFTLLQVTKESDNVTVSARIYRLAIFSYYTFWLTASTSVGNGNKSSDIIHVYTDQDIPEGPVGNLTFESISSTAIHVSWEPPSQPNGLVFYYLSLNLQQSPPRHMIPPLVTYENSIDFDDLEKYTDYIFKITPSTEKGFSETYTTQLHIKTEEDVPDTPPIINTFKNLSSTSILLSWDPPLKPNGAILGYHLTLQGPHANHTFVTSGNHIVLEELSPFTLYSFFAAARTMKGLGPSSILFFYTDESAPLAPPQNLTLINYTSDFVWLTWSPSPLPGGIVKVYSFKIHEHETDTVFYKNISGLQTDAKLEGLEPVSTYSVSVSAFTKVGNGNQYSNVVEFTTQESVPEAVRNIECVARDWQSVSVRWDPPRKTNGIIIHYMITVGGNSTKVSPRDPTYTFTKLLPNTSYVFEVRASTSAGEGNESRCDISTLPETVPSAPTNVAFSNVQSTSATLTWTKPDTIFGYFQNYKITTQLRAQKCREWEPEECIEHQKDQYLYEANQTEETVHGLKKFRWYRFQVAASTNVGYSNASEWISTQTLPGPPDGPPENVHVVATSPFGINISWSEPAVITGPTFYLIDVKSVDDDDFNISFLKSNEENKTTEINNLEVFTRYSVVITAFVGNVSRAYTDGKSSAEVIITTLESVPKDPPNNMTFQKIPDEVTKFQLTFLPPSQPNGNIRVYQALVYREDDPTAVQIHNFSIIQKTDTSIIAMLEGLKGGHTYNISVYAINSAGAGPKVQMRITMDIKAPARPKSKPIPIRDATGKLLVTSTTITIRMPICYYNDDHGPIRNVQVLVAETGAQQDGNVTKWYDAYFNKARPYFTNEGFPNPPCIEGKTKFSGNEEIYVIGADNACMIPGNEEKICNGPLKPKKQYLFKFRATNVMGQFTDSEYSDPIKTLGEGLSERTVEIILSVTLCILSIILLGTAIFAFVRIRQKQKEGGTYSPRDAEIIDTKFKLDQLITVADLELKDERLTRLLSYRKSIKPISKKSFLQHVEELCTNSNLKFQEEFSELPKFLQDLSSTDADLPWNRAKNRFPNIKPYNNNRVKLIADVSLPGSDYINASYVSGYLCPNEFIATQGPLPGTVGDFWRMVWETRTKTLVMLTQCFEKGRIRCHQYWPEDNKPVTVFGDIVITKLMEDIQIDWTIRDLKIERHGDCMTVRQCNFTGWPEHGVPENTTPLIHFVKLVRTSRAHDTTPMVVHCSAGVGRTGVFIALDHLTQHINNHDFVDIYGLVAELRSERMCMVQNLAQYIFLHQCILDLLSNKGGHQPVCFVNYSTLQKMDSLDAMEGDVELEWEETTM.

The first 18 residues, 1–18, serve as a signal peptide directing secretion; the sequence is MMDFHFSFLFLLIGTSES. At 19-1908 the chain is on the extracellular side; that stretch reads QVDVSSSFDG…GEGLSERTVE (1890 aa). Residue Asn-54 is glycosylated (N-linked (GlcNAc...) asparagine). Fibronectin type-III domains follow at residues 60–155, 159–254, 310–398, 401–501, 474–566, 570–665, 670–759, 764–854, 859–948, 953–1053, 1058–1151, 1156–1243, 1248–1341, 1345–1431, 1435–1539, 1544–1642, and 1647–1748; these read PPVF…TAES, KVVN…SSST, PPQN…PPDV, AVFD…PHND, GFYE…TVRT, VPSS…TPED, SPQD…TSET, APEN…TEED, PPQN…TPEG, PPND…TDQD, PVGN…TEED, PPII…TDES, PPQN…TQES, AVRN…LPET, APTN…TLPG, PPEN…TLES, and PPNN…IKAP. N-linked (GlcNAc...) asparagine glycosylation is found at Asn-162, Asn-169, Asn-318, Asn-354, and Asn-389. 2 N-linked (GlcNAc...) asparagine glycosylation sites follow: Asn-733 and Asn-746. Asn-904, Asn-998, Asn-1010, and Asn-1040 each carry an N-linked (GlcNAc...) asparagine glycan. Asn-1251 and Asn-1256 each carry an N-linked (GlcNAc...) asparagine glycan. Asn-1805 is a glycosylation site (N-linked (GlcNAc...) asparagine). Residues 1909 to 1929 form a helical membrane-spanning segment; the sequence is IILSVTLCILSIILLGTAIFA. Over 1930 to 2302 the chain is Cytoplasmic; that stretch reads FVRIRQKQKE…VELEWEETTM (373 aa). Residues 2006 to 2262 enclose the Tyrosine-protein phosphatase domain; that stretch reads FQEEFSELPK…IFLHQCILDL (257 aa). Residue Cys-2203 is the Phosphocysteine intermediate of the active site.

Belongs to the protein-tyrosine phosphatase family. Receptor class 2A subfamily. As to quaternary structure, interacts with TPRN. TPRN, CLIC5 and PTPQR form concentric rings at the base of stereocilia and may form a complex.

The protein localises to the cell projection. Its subcellular location is the stereocilium. It localises to the apical cell membrane. The protein resides in the basal cell membrane. The catalysed reaction is a 1,2-diacyl-sn-glycero-3-phospho-(1D-myo-inositol-3,4,5-trisphosphate) + H2O = a 1,2-diacyl-sn-glycero-3-phospho-(1D-myo-inositol-4,5-bisphosphate) + phosphate. The enzyme catalyses a 1,2-diacyl-sn-glycero-3-phospho-(1D-myo-inositol-3,4,5-trisphosphate) + H2O = a 1,2-diacyl-sn-glycero-3-phospho-(1D-myo-inositol-3,4-bisphosphate) + phosphate. It catalyses the reaction a 1,2-diacyl-sn-glycero-3-phospho-(1D-myo-inositol-3,5-bisphosphate) + H2O = a 1,2-diacyl-sn-glycero-3-phospho-(1D-myo-inositol-5-phosphate) + phosphate. It carries out the reaction a 1,2-diacyl-sn-glycero-3-phospho-(1D-myo-inositol-3,5-bisphosphate) + H2O = a 1,2-diacyl-sn-glycero-3-phospho-(1D-myo-inositol-3-phosphate) + phosphate. The catalysed reaction is a 1,2-diacyl-sn-glycero-3-phospho-(1D-myo-inositol-4,5-bisphosphate) + H2O = a 1,2-diacyl-sn-glycero-3-phospho-(1D-myo-inositol 4-phosphate) + phosphate. Its function is as follows. Dephosphorylates phosphatidylinositol phosphates, such as phosphatidylinositol 3,4,5-trisphosphate (PIP3) and phosphatidylinositol 3,5-diphosphates, with preference for PIP3. Phosphate can be hydrolyzed from the D3 and D5 positions in the inositol ring. Has low tyrosine-protein phosphatase activity in vitro; however, the relevance of such activity in vivo is unclear. Plays an important role in adipogenesis of mesenchymal stem cells (MSCs). Regulates the phosphorylation state of AKT1 by regulating the levels of PIP3 level in MSCs and preadipocyte cells. Required for hair bundle maturation, a process that enables hair cells to detect and transmit sound and balance signals effectively, therefore affecting auditory function. May act by regulating the level of phosphatidylinositol 4,5-bisphosphate (PIP2) level in the basal region of hair bundles. The protein is Phosphatidylinositol phosphatase PTPRQ (Ptprq) of Rattus norvegicus (Rat).